The chain runs to 294 residues: Putative pyruvate, phosphate dikinase regulatory protein (294 aa).

156–163 (GVSRSGKT) lines the ADP pocket.

This sequence belongs to the pyruvate, phosphate/water dikinase regulatory protein family. PDRP subfamily.

The enzyme catalyses N(tele)-phospho-L-histidyl/L-threonyl-[pyruvate, phosphate dikinase] + ADP = N(tele)-phospho-L-histidyl/O-phospho-L-threonyl-[pyruvate, phosphate dikinase] + AMP + H(+). It catalyses the reaction N(tele)-phospho-L-histidyl/O-phospho-L-threonyl-[pyruvate, phosphate dikinase] + phosphate + H(+) = N(tele)-phospho-L-histidyl/L-threonyl-[pyruvate, phosphate dikinase] + diphosphate. Functionally, bifunctional serine/threonine kinase and phosphorylase involved in the regulation of the pyruvate, phosphate dikinase (PPDK) by catalyzing its phosphorylation/dephosphorylation. This chain is Putative pyruvate, phosphate dikinase regulatory protein, found in Cutibacterium acnes (strain DSM 16379 / KPA171202) (Propionibacterium acnes).